The following is a 182-amino-acid chain: Cytidylate kinase (182 aa).

7–15 serves as a coordination point for ATP; it reads GLPGSGTTS.

It belongs to the cytidylate kinase family. Type 2 subfamily.

The protein localises to the cytoplasm. It carries out the reaction CMP + ATP = CDP + ADP. It catalyses the reaction dCMP + ATP = dCDP + ADP. This chain is Cytidylate kinase, found in Methanoregula boonei (strain DSM 21154 / JCM 14090 / 6A8).